A 340-amino-acid polypeptide reads, in one-letter code: Guanine nucleotide-binding protein G(I)/G(S)/G(T) subunit beta-3 (340 aa).

WD repeat units lie at residues 53–83 (GHLAKIYAMHWATDSKLLVSASQDGKLIVWD), 95–125 (LRSSWVMTCAYAPSGNFVACGGLDNMCSIYN), 141–170 (AHTGYLSCCRFLDDNNIVTSSGDTTCALWD), 182–212 (GHTGDCMSLAVSPDYKLFISGACDASAKLWD), 224–254 (GHESDINAICFFPNGEAICTGSDDASCRLFD), 268–298 (SIICGITSVAFSLSGRLLFAGYDDFNCNVWD), and 310–340 (GHDNRVSCLGVTADGMAVATGSWDSFLKIWN).

The protein belongs to the WD repeat G protein beta family. G proteins are composed of 3 units, alpha, beta and gamma. Interacts with RASD2.

Guanine nucleotide-binding proteins (G proteins) are involved as a modulator or transducer in various transmembrane signaling systems. The beta and gamma chains are required for the GTPase activity, for replacement of GDP by GTP, and for G protein-effector interaction. The chain is Guanine nucleotide-binding protein G(I)/G(S)/G(T) subunit beta-3 (Gnb3) from Mus musculus (Mouse).